Here is a 355-residue protein sequence, read N- to C-terminus: Peptide chain release factor 1 (355 aa).

Residue Q233 is modified to N5-methylglutamine.

This sequence belongs to the prokaryotic/mitochondrial release factor family. Post-translationally, methylated by PrmC. Methylation increases the termination efficiency of RF1.

The protein resides in the cytoplasm. Its function is as follows. Peptide chain release factor 1 directs the termination of translation in response to the peptide chain termination codons UAG and UAA. The sequence is that of Peptide chain release factor 1 from Bacillus cytotoxicus (strain DSM 22905 / CIP 110041 / 391-98 / NVH 391-98).